The chain runs to 293 residues: 33 kDa chaperonin (293 aa).

2 disulfides stabilise this stretch: Cys238-Cys240 and Cys271-Cys274.

The protein belongs to the HSP33 family. Under oxidizing conditions two disulfide bonds are formed involving the reactive cysteines. Under reducing conditions zinc is bound to the reactive cysteines and the protein is inactive.

The protein localises to the cytoplasm. Its function is as follows. Redox regulated molecular chaperone. Protects both thermally unfolding and oxidatively damaged proteins from irreversible aggregation. Plays an important role in the bacterial defense system toward oxidative stress. The protein is 33 kDa chaperonin of Clostridium beijerinckii (strain ATCC 51743 / NCIMB 8052) (Clostridium acetobutylicum).